The primary structure comprises 438 residues: UDP-glycosyltransferase 84B2 (438 aa).

UDP-alpha-D-glucose is bound by residues S260, 314 to 316, 331 to 339, and 353 to 356; these read GQQ, HCGWNSTIE, and WIDQ.

This sequence belongs to the UDP-glycosyltransferase family.

The sequence is that of UDP-glycosyltransferase 84B2 (UGT84B2) from Arabidopsis thaliana (Mouse-ear cress).